Consider the following 116-residue polypeptide: Large ribosomal subunit protein bL20c (116 aa).

The protein belongs to the bacterial ribosomal protein bL20 family.

The protein resides in the plastid. It is found in the chloroplast. In terms of biological role, binds directly to 23S ribosomal RNA and is necessary for the in vitro assembly process of the 50S ribosomal subunit. It is not involved in the protein synthesizing functions of that subunit. The polypeptide is Large ribosomal subunit protein bL20c (Cryptomeria japonica (Japanese cedar)).